Here is a 495-residue protein sequence, read N- to C-terminus: Transcription termination/antitermination protein NusA (495 aa).

In terms of domain architecture, S1 motif spans 135 to 200; that stretch reads GQIITGIVKK…RGAQLFLSRS (66 aa). Positions 302–370 constitute a KH domain; the sequence is HHTMDIAVDS…KNLNVSEKVI (69 aa). Tandem repeats lie at residues 364-414 and 439-489. Positions 364–489 are 2 X 51 AA approximate repeats; the sequence is NVSEKVIKTL…LLIMAARNIC (126 aa).

It belongs to the NusA family. Monomer. Binds directly to the core enzyme of the DNA-dependent RNA polymerase and to nascent RNA.

Its subcellular location is the cytoplasm. Participates in both transcription termination and antitermination. The protein is Transcription termination/antitermination protein NusA of Buchnera aphidicola subsp. Schizaphis graminum (strain Sg).